A 240-amino-acid polypeptide reads, in one-letter code: MATVMEFKATARPKSGKGAARAERRAGRVPGVIYGDNKPPLPISVEDKDLRLRIQAGRFLTTIFDVVLDGQKHRVIPRDYHLDPVKDFPVHVDFLRLGEGATIRISVPLHLKGLESAPGVKRGGTFNIVTHTVDLEAPADAIPQFIEADVSTLDIGVSLHLSDIALPKGVKSVSREDVTLVTIVPPSGFNEEAAAPGAAPAAAAAAPAAKAGAAKAPAAAAPAAKAGAAKAPAAPAAKKK.

The tract at residues 1–24 is disordered; it reads MATVMEFKATARPKSGKGAARAER.

This sequence belongs to the bacterial ribosomal protein bL25 family. CTC subfamily. As to quaternary structure, part of the 50S ribosomal subunit; part of the 5S rRNA/L5/L18/L25 subcomplex. Contacts the 5S rRNA. Binds to the 5S rRNA independently of L5 and L18.

Its function is as follows. This is one of the proteins that binds to the 5S RNA in the ribosome where it forms part of the central protuberance. This Rhodopseudomonas palustris (strain HaA2) protein is Large ribosomal subunit protein bL25.